A 614-amino-acid polypeptide reads, in one-letter code: 1-deoxy-D-xylulose-5-phosphate synthase (614 aa).

Residues His-76 and Gly-117–Ser-119 contribute to the thiamine diphosphate site. Asp-148 provides a ligand contact to Mg(2+). Residues Gly-149–Ala-150, Asn-177, Tyr-285, and Glu-366 each bind thiamine diphosphate. Residue Asn-177 coordinates Mg(2+).

It belongs to the transketolase family. DXPS subfamily. Homodimer. The cofactor is Mg(2+). Thiamine diphosphate is required as a cofactor.

It carries out the reaction D-glyceraldehyde 3-phosphate + pyruvate + H(+) = 1-deoxy-D-xylulose 5-phosphate + CO2. It participates in metabolic intermediate biosynthesis; 1-deoxy-D-xylulose 5-phosphate biosynthesis; 1-deoxy-D-xylulose 5-phosphate from D-glyceraldehyde 3-phosphate and pyruvate: step 1/1. Its function is as follows. Catalyzes the acyloin condensation reaction between C atoms 2 and 3 of pyruvate and glyceraldehyde 3-phosphate to yield 1-deoxy-D-xylulose-5-phosphate (DXP). This is 1-deoxy-D-xylulose-5-phosphate synthase from Pasteurella multocida (strain Pm70).